A 933-amino-acid chain; its full sequence is Anoctamin-7 (933 aa).

Topologically, residues 1–355 are cytoplasmic; it reads MRMAATAWAG…YFAWLGFYTG (355 aa). The tract at residues 43 to 101 is disordered; sequence ETSSGSHCARSRMLRRRAQEEDSTVLIDVSPPEAEKRGSYGSTAHASEPGGQQAAACRA. Residues 356 to 376 traverse the membrane as a helical segment; that stretch reads WLLPAAVVGTLVFLVGCFLVF. Topologically, residues 377–420 are extracellular; sequence SDIPTQELCGSKDSFEMCPLCLDCPFWLLSSACALAQAGRLFDH. A helical membrane pass occupies residues 421–441; the sequence is GGTVFFSLFMALWAVLLLEYW. Topologically, residues 442-499 are cytoplasmic; the sequence is KRKSATLAYRWDCSDYEDTEERPRPQFAASAPMTAPNPITGEDEPYFPERSRARRMLA. The chain crosses the membrane as a helical span at residues 500–520; the sequence is GSVVIVVMVAVVVMCLVSIIL. Residues 521–550 are Extracellular-facing; sequence YRAIMAIVVSRSGNTLLAAWASRIASLTGS. The helical transmembrane segment at 551-571 threads the bilayer; it reads VVNLVFILILSKIYVSLAHVL. Over 572-588 the chain is Cytoplasmic; that stretch reads TRWEMHRTQTKFEDAFT. A helical transmembrane segment spans residues 589 to 609; it reads LKVFIFQFVNFYSSPVYIAFF. At 610 to 714 the chain is on the extracellular side; the sequence is KGRFVGYPGN…FDEYLEMVLQ (105 aa). Residues 715–735 form a helical membrane-spanning segment; sequence FGFVTIFVAACPLAPLFALLN. The Cytoplasmic portion of the chain corresponds to 736–763; the sequence is NWVEIRLDARKFVCEYRRPVAERAQDIG. A helical transmembrane segment spans residues 764–784; the sequence is IWFHILAGLTHLAVISNAFLL. At 785–843 the chain is on the extracellular side; it reads AFSSDFLPRAYYRWTRAHDLRGFLNFTLARAPSSFAAAHNRTCRYRAFRDDDGHYSQTY. 2 N-linked (GlcNAc...) asparagine glycosylation sites follow: Asn809 and Asn824. The helical transmembrane segment at 844–864 threads the bilayer; it reads WNLLAIRLAFVIVFEHVVFSV. Residues 865–933 are Cytoplasmic-facing; that stretch reads GRLLDLLVPD…TVPKASQLQQ (69 aa). The tract at residues 902 to 933 is disordered; the sequence is GTNGTKDEQPEGSELSSHWTPFTVPKASQLQQ. Residues 915 to 933 are compositionally biased toward polar residues; that stretch reads ELSSHWTPFTVPKASQLQQ.

Belongs to the anoctamin family. In terms of tissue distribution, specifically expressed in epithelial cells of the prostate (at protein level).

Its subcellular location is the cell membrane. The protein resides in the cell junction. It is found in the endoplasmic reticulum. It localises to the cytoplasm. The protein localises to the cytosol. It catalyses the reaction a 1,2-diacyl-sn-glycero-3-phospho-L-serine(in) = a 1,2-diacyl-sn-glycero-3-phospho-L-serine(out). It carries out the reaction a beta-D-galactosyl-(1&lt;-&gt;1')-N-acylsphing-4-enine(out) = a beta-D-galactosyl-(1&lt;-&gt;1')-N-acylsphing-4-enine(in). The enzyme catalyses a 1,2-diacyl-sn-glycero-3-phosphocholine(in) = a 1,2-diacyl-sn-glycero-3-phosphocholine(out). In terms of biological role, has calcium-dependent phospholipid scramblase activity; scrambles phosphatidylserine, phosphatidylcholine and galactosylceramide. Does not exhibit calcium-activated chloride channel (CaCC) activity. May play a role in cell-cell interactions. The protein is Anoctamin-7 (ANO7) of Homo sapiens (Human).